The sequence spans 717 residues: MIPMKRVHFEYIQIHLASPERIRKWGERTLSNGEVVGEVTRSETINYRTLKPEMDGLFCERIFGPVKDWECHCGQYKRVRYNTDLKNDIVCERCGVEVTESGVRRHRMGHIKLAAPVTHVWYLKGIPSYISIILGLPRKEVEGIVYYNNYETTGSKEIARFIKDKQLLERKDRKIIDQSFFSLDEESELFSGAQAIQTMLSSLDLKTTAQNIREELAATEDWSEEEEDRLRKKRNKLIKRLKIINHFLATGAKPEWMILSILPVLPPDLRPMVQLDGGQFATSDLNDLYRRVINRNNRLSKLNTMLAPEIVVRSEKRMLQEAVDALIDNGKRGRQALVGSNKIPLKSLSDIIKGKQGRFRQNLLGKRVDYSGRSVIVVGPQLKLHQCGLPKEMAIELFQPFVIHNLINQGLANNIKAAKRKLQNNDPSIWEVLKQVIQGHPVLLNRAPTLHRLGIQAFEPILVEGRAIQLHPLVCPAFNADFDGDQMAVHIPLSLEAQTEARLLMLASSNLLSPATGQPIIAPSQDMILGCYYLTTENPKFQIERGHYFSTLKDAVMAYEQKRIHLHSYIWVRFQGRIDTKSTQEEPIEIRIEESGFCSTIYRRYQYRSFKNKKELKTAATPFYNSENAYLMMNKKKMSIPQKPSLESNNLSLTATATATATATATATATATATATATATATNANDHYFVQYVRTTPGRILFNQVIHECLELNEIHP.

Residues Cys71, Cys73, Cys91, and Cys94 each coordinate Zn(2+). 3 residues coordinate Mg(2+): Asp481, Asp483, and Asp485.

This sequence belongs to the RNA polymerase beta' chain family. RpoC1 subfamily. In terms of assembly, in plastids the minimal PEP RNA polymerase catalytic core is composed of four subunits: alpha, beta, beta', and beta''. When a (nuclear-encoded) sigma factor is associated with the core the holoenzyme is formed, which can initiate transcription. Requires Mg(2+) as cofactor. Zn(2+) serves as cofactor.

The protein resides in the plastid. Its subcellular location is the chloroplast. The enzyme catalyses RNA(n) + a ribonucleoside 5'-triphosphate = RNA(n+1) + diphosphate. DNA-dependent RNA polymerase catalyzes the transcription of DNA into RNA using the four ribonucleoside triphosphates as substrates. The sequence is that of DNA-directed RNA polymerase subunit beta' from Chlorokybus atmophyticus (Soil alga).